The sequence spans 445 residues: 3-phosphoshikimate 1-carboxyvinyltransferase (445 aa).

3-phosphoshikimate-binding residues include lysine 28, serine 29, and arginine 33. Residue lysine 28 coordinates phosphoenolpyruvate. Glycine 102 and arginine 130 together coordinate phosphoenolpyruvate. Residues serine 179, serine 180, glutamine 181, glutamate 330, and histidine 357 each coordinate 3-phosphoshikimate. Phosphoenolpyruvate is bound at residue glutamine 181. The active-site Proton acceptor is glutamate 330. Residues arginine 361, arginine 405, and lysine 430 each contribute to the phosphoenolpyruvate site.

This sequence belongs to the EPSP synthase family. In terms of assembly, monomer.

It localises to the cytoplasm. It catalyses the reaction 3-phosphoshikimate + phosphoenolpyruvate = 5-O-(1-carboxyvinyl)-3-phosphoshikimate + phosphate. It participates in metabolic intermediate biosynthesis; chorismate biosynthesis; chorismate from D-erythrose 4-phosphate and phosphoenolpyruvate: step 6/7. In terms of biological role, catalyzes the transfer of the enolpyruvyl moiety of phosphoenolpyruvate (PEP) to the 5-hydroxyl of shikimate-3-phosphate (S3P) to produce enolpyruvyl shikimate-3-phosphate and inorganic phosphate. In Bifidobacterium longum (strain DJO10A), this protein is 3-phosphoshikimate 1-carboxyvinyltransferase.